Here is a 298-residue protein sequence, read N- to C-terminus: Tyrosine recombinase XerC (298 aa).

In terms of domain architecture, Core-binding (CB) spans 1–84 (MNHIQEAFLN…TLRTFYEYWM (84 aa)). Positions 105–286 (YLPQFFYEEE…SNQQLRKVYL (182 aa)) constitute a Tyr recombinase domain. Active-site residues include R145, K169, H238, R241, and H264. Y273 (O-(3'-phospho-DNA)-tyrosine intermediate) is an active-site residue.

Belongs to the 'phage' integrase family. XerC subfamily. In terms of assembly, forms a cyclic heterotetrameric complex composed of two molecules of XerC and two molecules of XerD.

The protein resides in the cytoplasm. In terms of biological role, site-specific tyrosine recombinase, which acts by catalyzing the cutting and rejoining of the recombining DNA molecules. The XerC-XerD complex is essential to convert dimers of the bacterial chromosome into monomers to permit their segregation at cell division. It also contributes to the segregational stability of plasmids. The protein is Tyrosine recombinase XerC of Staphylococcus aureus (strain MRSA252).